The primary structure comprises 397 residues: S-adenosylmethionine synthase (397 aa).

Histidine 16 lines the ATP pocket. Aspartate 18 provides a ligand contact to Mg(2+). Residue glutamate 44 participates in K(+) binding. Residues glutamate 57 and glutamine 100 each contribute to the L-methionine site. Positions 100-110 are flexible loop; the sequence is QSPDIAQGVNE. ATP is bound by residues 175–177, 242–243, aspartate 251, 257–258, alanine 274, and lysine 278; these read DAK, RF, and RK. An L-methionine-binding site is contributed by aspartate 251. Lysine 282 lines the L-methionine pocket.

It belongs to the AdoMet synthase family. As to quaternary structure, homotetramer; dimer of dimers. Requires Mg(2+) as cofactor. It depends on K(+) as a cofactor.

The protein resides in the cytoplasm. The enzyme catalyses L-methionine + ATP + H2O = S-adenosyl-L-methionine + phosphate + diphosphate. It functions in the pathway amino-acid biosynthesis; S-adenosyl-L-methionine biosynthesis; S-adenosyl-L-methionine from L-methionine: step 1/1. In terms of biological role, catalyzes the formation of S-adenosylmethionine (AdoMet) from methionine and ATP. The overall synthetic reaction is composed of two sequential steps, AdoMet formation and the subsequent tripolyphosphate hydrolysis which occurs prior to release of AdoMet from the enzyme. The polypeptide is S-adenosylmethionine synthase (Streptococcus thermophilus (strain CNRZ 1066)).